The chain runs to 366 residues: Leucine-rich repeat-containing protein 58 (366 aa).

Position 19 is a phosphoserine (Ser19). LRR repeat units lie at residues 40–61, 64–86, 87–108, 116–138, 139–161, 162–184, 185–206, 208–229, and 231–251; these read ALLR…LGGG, HLQL…LTLS, GLRT…PKGL, SLQV…LELR, ALQT…ENLR, SLEC…ANLP, SLNY…LSQL, SLRS…ILNL, and HLEE…RDLT. A compositionally biased stretch (low complexity) spans 337-346; the sequence is ASHSSTSQSE. Positions 337–356 are disordered; sequence ASHSSTSQSESDSEDEASVA.

The sequence is that of Leucine-rich repeat-containing protein 58 (Lrrc58) from Mus musculus (Mouse).